We begin with the raw amino-acid sequence, 1076 residues long: Regulator of G-protein signaling protein-like (1076 aa).

In terms of domain architecture, RGS spans N645 to E764. The span at T834–S852 shows a compositional bias: polar residues. The tract at residues T834 to D854 is disordered. Residues V960–W982 traverse the membrane as a helical segment.

It is found in the membrane. The sequence is that of Regulator of G-protein signaling protein-like (RGSL1) from Homo sapiens (Human).